A 274-amino-acid chain; its full sequence is Large ribosomal subunit protein uL2 (274 aa).

Disordered regions lie at residues 37–59 and 222–262; these read KAKN…GGHK and GAAM…RTNK. Positions 50–59 are enriched in basic residues; that stretch reads TTRHKGGGHK.

This sequence belongs to the universal ribosomal protein uL2 family. In terms of assembly, part of the 50S ribosomal subunit. Forms a bridge to the 30S subunit in the 70S ribosome.

In terms of biological role, one of the primary rRNA binding proteins. Required for association of the 30S and 50S subunits to form the 70S ribosome, for tRNA binding and peptide bond formation. It has been suggested to have peptidyltransferase activity; this is somewhat controversial. Makes several contacts with the 16S rRNA in the 70S ribosome. This Alcanivorax borkumensis (strain ATCC 700651 / DSM 11573 / NCIMB 13689 / SK2) protein is Large ribosomal subunit protein uL2.